The chain runs to 89 residues: Small ribosomal subunit protein uS15 (89 aa).

It belongs to the universal ribosomal protein uS15 family. As to quaternary structure, part of the 30S ribosomal subunit. Forms a bridge to the 50S subunit in the 70S ribosome, contacting the 23S rRNA.

Its function is as follows. One of the primary rRNA binding proteins, it binds directly to 16S rRNA where it helps nucleate assembly of the platform of the 30S subunit by binding and bridging several RNA helices of the 16S rRNA. Forms an intersubunit bridge (bridge B4) with the 23S rRNA of the 50S subunit in the ribosome. This chain is Small ribosomal subunit protein uS15, found in Vibrio cholerae serotype O1 (strain ATCC 39541 / Classical Ogawa 395 / O395).